Consider the following 182-residue polypeptide: Adenine phosphoribosyltransferase (182 aa).

This sequence belongs to the purine/pyrimidine phosphoribosyltransferase family. Homodimer.

Its subcellular location is the cytoplasm. It catalyses the reaction AMP + diphosphate = 5-phospho-alpha-D-ribose 1-diphosphate + adenine. It functions in the pathway purine metabolism; AMP biosynthesis via salvage pathway; AMP from adenine: step 1/1. In terms of biological role, catalyzes a salvage reaction resulting in the formation of AMP, that is energically less costly than de novo synthesis. The sequence is that of Adenine phosphoribosyltransferase from Campylobacter concisus (strain 13826).